Consider the following 193-residue polypeptide: Oocyte-secreted protein 3 (193 aa).

A signal peptide spans Met1–Gln22. N-linked (GlcNAc...) asparagine glycosylation is found at Asn64, Asn130, Asn148, Asn151, Asn165, and Asn178.

Belongs to the PLAC1 family.

Its subcellular location is the secreted. This Homo sapiens (Human) protein is Oocyte-secreted protein 3.